Here is a 1927-residue protein sequence, read N- to C-terminus: Lactase/phlorizin hydrolase (1927 aa).

Residues 1–19 (MELSWHVVFIALLSFSCWG) form the signal peptide. Positions 20–868 (SDWESDRNFI…NTVNLPSKVR (849 aa)) are cleaved as a propeptide — XBetaGly. Topologically, residues 20 to 1882 (SDWESDRNFI…LMLGTTEAQT (1863 aa)) are extracellular. A glycan (N-linked (GlcNAc...) asparagine) is linked at Asn-42. A glycosyl hydrolase-1 1; Region I region spans residues 44-286 (SGLLGDQSSN…FIFNLKLPDC (243 aa)). The interval 362–855 (IWEAFANQSR…GFLTKGAKRL (494 aa)) is glycosyl hydrolase-1 2; Region II. Asn-368, Asn-418, Asn-512, Asn-821, Asn-934, Asn-946, and Asn-989 each carry an N-linked (GlcNAc...) asparagine glycan. The glycosyl hydrolase-1 3; Region III. Phlorizin hydrolase/glycosylceramidase activity stretch occupies residues 902 to 1366 (TFRDDFLWGV…EVITNNGMPL (465 aa)). Glu-1065 serves as the catalytic Proton donor; for phlorizin hydrolase/Glycosylceramidase activity. N-linked (GlcNAc...) asparagine glycosylation is present at Asn-1174. Residues 1220 to 1244 (RLNPPSYEDDQEMAEEEDPSWPSTA) are disordered. Residues 1226–1238 (YEDDQEMAEEEDP) are compositionally biased toward acidic residues. Catalysis depends on Glu-1273, which acts as the Nucleophile; for phlorizin hydrolase/Glycosylceramidase activity. Residues Asn-1340 and Asn-1508 are each glycosylated (N-linked (GlcNAc...) asparagine). The interval 1373-1846 (LYGRFPEGFI…CNGFPDPATG (474 aa)) is glycosyl hydrolase-1 4; Region IV. Lactase activity. The Proton donor; for lactase activity role is filled by Glu-1538. The segment at 1647–1927 (RDRSLAAGLN…QQELSPVSSF (281 aa)) is required for homodimerization and transport to the plasma membrane. 2 N-linked (GlcNAc...) asparagine glycosylation sites follow: Asn-1656 and Asn-1672. The active-site Nucleophile; for lactase activity is Glu-1749. 2 N-linked (GlcNAc...) asparagine glycosylation sites follow: Asn-1761 and Asn-1814. A helical transmembrane segment spans residues 1883-1901 (ALYVLFSLVLLGVCGLAFL). Residues 1902 to 1927 (SYKYCKRSKQGKTQRSQQELSPVSSF) are Cytoplasmic-facing.

Belongs to the glycosyl hydrolase 1 family. As to quaternary structure, homodimer. N-glycosylated. Specifically expressed in small intestine.

Its subcellular location is the apical cell membrane. It carries out the reaction lactose + H2O = beta-D-galactose + D-glucose. It catalyses the reaction phlorizin + H2O = phloretin + beta-D-glucose. The catalysed reaction is D-cellobiose + H2O = beta-D-glucose + D-glucose. The enzyme catalyses quercetin 4'-O-beta-D-glucoside + H2O = quercetin + beta-D-glucose. It carries out the reaction quercetin 3-O-beta-D-glucoside + H2O = quercetin + beta-D-glucose. It catalyses the reaction kaempferol 3-O-beta-D-glucoside + H2O = kaempferol + beta-D-glucose. The catalysed reaction is luteolin 7-O-beta-D-glucoside + H2O = luteolin + beta-D-glucose. The enzyme catalyses luteolin 4'-O-beta-D-glucoside + H2O = luteolin + beta-D-glucose. It carries out the reaction (2S)-naringenin 7-O-beta-D-glucoside + H2O = (2S)-naringenin + beta-D-glucose. It catalyses the reaction eriodictyol-7-O-beta-D-glucoside + H2O = (S)-eriodictyol + beta-D-glucose. The catalysed reaction is apigenin 7-O-beta-D-glucoside + H2O = apigenin + beta-D-glucose. The enzyme catalyses daidzein 7-O-beta-D-glucoside + H2O = daidzein + beta-D-glucose + H(+). It carries out the reaction genistein 7-O-beta-D-glucoside + H2O = genistein + beta-D-glucose. It catalyses the reaction a beta-D-galactosyl-N-acylsphingosine + H2O = a ceramide + beta-D-galactose.. The catalysed reaction is beta-D-glucosyl-(1&lt;-&gt;1')-N-hexadecanoylsphing-4-enine + H2O = N-hexadecanoylsphing-4-enine + beta-D-glucose. The enzyme catalyses beta-D-galactosyl-(1&lt;-&gt;1')-N-hexadecanoylsphing-4-enine + H2O = beta-D-galactose + N-hexadecanoylsphing-4-enine. It carries out the reaction beta-D-galactosyl-(1&lt;-&gt;1')-N-hexadecanoylsphinganine + H2O = N-hexadecanoylsphinganine + beta-D-galactose. It catalyses the reaction beta-D-glucosyl-(1&lt;-&gt;1')-N-hexadecanoylsphinganine + H2O = N-hexadecanoylsphinganine + beta-D-glucose. In terms of biological role, broad specificity glycosidase of the intestinal brush border membrane that hydrolyzes lactose, the main sugar in mammalian milk, to produce D-glucose and D-galactose. The mature protein is composed of two domains that catalyze the hydrolysis of beta-glucopyranosides and beta-galactopyranosides, with a preference for hydrophilic aglycones (in lactose and cellobiose) for one domain and hydrophobic aglycones (in phlorizin and glycosylceramides) for the other. The polypeptide is Lactase/phlorizin hydrolase (Homo sapiens (Human)).